We begin with the raw amino-acid sequence, 431 residues long: Peptidase B (431 aa).

Residues Lys-196 and Asp-201 each contribute to the Mn(2+) site. Lys-208 is an active-site residue. Asp-219, Asp-278, and Glu-280 together coordinate Mn(2+). Arg-282 is a catalytic residue.

Belongs to the peptidase M17 family. In terms of assembly, homohexamer. It depends on Mn(2+) as a cofactor.

It is found in the cytoplasm. The enzyme catalyses Release of an N-terminal amino acid, Xaa, from a peptide or arylamide. Xaa is preferably Glu or Asp but may be other amino acids, including Leu, Met, His, Cys and Gln.. In terms of biological role, probably plays an important role in intracellular peptide degradation. This Vibrio atlanticus (strain LGP32) (Vibrio splendidus (strain Mel32)) protein is Peptidase B.